Here is a 285-residue protein sequence, read N- to C-terminus: ATP phosphoribosyltransferase (285 aa).

Belongs to the ATP phosphoribosyltransferase family. Long subfamily. Mg(2+) is required as a cofactor.

It is found in the cytoplasm. It catalyses the reaction 1-(5-phospho-beta-D-ribosyl)-ATP + diphosphate = 5-phospho-alpha-D-ribose 1-diphosphate + ATP. Its pathway is amino-acid biosynthesis; L-histidine biosynthesis; L-histidine from 5-phospho-alpha-D-ribose 1-diphosphate: step 1/9. With respect to regulation, feedback inhibited by histidine. In terms of biological role, catalyzes the condensation of ATP and 5-phosphoribose 1-diphosphate to form N'-(5'-phosphoribosyl)-ATP (PR-ATP). Has a crucial role in the pathway because the rate of histidine biosynthesis seems to be controlled primarily by regulation of HisG enzymatic activity. This Streptomyces coelicolor (strain ATCC BAA-471 / A3(2) / M145) protein is ATP phosphoribosyltransferase.